The chain runs to 394 residues: NAD(P)H-quinone oxidoreductase subunit H (394 aa).

It belongs to the complex I 49 kDa subunit family. In terms of assembly, NDH-1 can be composed of about 15 different subunits; different subcomplexes with different compositions have been identified which probably have different functions.

The protein localises to the cellular thylakoid membrane. The catalysed reaction is a plastoquinone + NADH + (n+1) H(+)(in) = a plastoquinol + NAD(+) + n H(+)(out). It catalyses the reaction a plastoquinone + NADPH + (n+1) H(+)(in) = a plastoquinol + NADP(+) + n H(+)(out). In terms of biological role, NDH-1 shuttles electrons from an unknown electron donor, via FMN and iron-sulfur (Fe-S) centers, to quinones in the respiratory and/or the photosynthetic chain. The immediate electron acceptor for the enzyme in this species is believed to be plastoquinone. Couples the redox reaction to proton translocation, and thus conserves the redox energy in a proton gradient. Cyanobacterial NDH-1 also plays a role in inorganic carbon-concentration. The polypeptide is NAD(P)H-quinone oxidoreductase subunit H (Prochlorococcus marinus (strain NATL1A)).